Reading from the N-terminus, the 245-residue chain is UDP-N-acetyl-D-mannosaminuronic acid transferase (245 aa).

Belongs to the glycosyltransferase 26 family.

The enzyme catalyses UDP-N-acetyl-alpha-D-mannosaminouronate + N-acetyl-alpha-D-glucosaminyl-di-trans,octa-cis-undecaprenyl diphosphate = beta-D-ManNAcA-(1-&gt;4)-alpha-D-GlcNAc-di-trans,octa-cis-undecaprenyl diphosphate + UDP + H(+). Its pathway is bacterial outer membrane biogenesis; enterobacterial common antigen biosynthesis. In terms of biological role, catalyzes the synthesis of Und-PP-GlcNAc-ManNAcA (Lipid II), the second lipid-linked intermediate involved in enterobacterial common antigen (ECA) synthesis. The polypeptide is UDP-N-acetyl-D-mannosaminuronic acid transferase (Photorhabdus laumondii subsp. laumondii (strain DSM 15139 / CIP 105565 / TT01) (Photorhabdus luminescens subsp. laumondii)).